The following is a 338-amino-acid chain: Biotin synthase (338 aa).

The 228-residue stretch at 50 to 277 (QAVQLSTLMS…KSYVRLSAGR (228 aa)) folds into the Radical SAM core domain. Residues Cys65, Cys69, and Cys72 each coordinate [4Fe-4S] cluster. Residues Cys109, Cys140, Cys200, and Arg272 each coordinate [2Fe-2S] cluster.

It belongs to the radical SAM superfamily. Biotin synthase family. Homodimer. [4Fe-4S] cluster is required as a cofactor. It depends on [2Fe-2S] cluster as a cofactor.

It catalyses the reaction (4R,5S)-dethiobiotin + (sulfur carrier)-SH + 2 reduced [2Fe-2S]-[ferredoxin] + 2 S-adenosyl-L-methionine = (sulfur carrier)-H + biotin + 2 5'-deoxyadenosine + 2 L-methionine + 2 oxidized [2Fe-2S]-[ferredoxin]. The protein operates within cofactor biosynthesis; biotin biosynthesis; biotin from 7,8-diaminononanoate: step 2/2. Its function is as follows. Catalyzes the conversion of dethiobiotin (DTB) to biotin by the insertion of a sulfur atom into dethiobiotin via a radical-based mechanism. This chain is Biotin synthase, found in Actinobacillus succinogenes (strain ATCC 55618 / DSM 22257 / CCUG 43843 / 130Z).